The sequence spans 433 residues: Putative wall-associated receptor kinase-like 16 (433 aa).

An N-terminal signal peptide occupies residues 1 to 22 (MKLQHVVYLVAIFFVVAIFVIA). The Extracellular portion of the chain corresponds to 23-29 (CIEENKY). A helical transmembrane segment spans residues 30 to 50 (LVWIMIILANTTNILSLVRSI). Over 51–433 (SYIKNIRKHQ…VARFDIEAGR (383 aa)) the chain is Cytoplasmic. The residue at position 97 (T97) is a Phosphothreonine. One can recognise a Protein kinase domain in the interval 108 to 391 (YDVSRILGQG…RAKTTKHNWL (284 aa)). ATP-binding positions include 114–122 (LGQGGQWTV) and K136. Residue Y181 is modified to Phosphotyrosine. D233 acts as the Proton acceptor in catalysis. Residues T267 and T272 each carry the phosphothreonine modification. Y280 carries the post-translational modification Phosphotyrosine.

The protein belongs to the protein kinase superfamily. Ser/Thr protein kinase family.

Its subcellular location is the membrane. It carries out the reaction L-seryl-[protein] + ATP = O-phospho-L-seryl-[protein] + ADP + H(+). The catalysed reaction is L-threonyl-[protein] + ATP = O-phospho-L-threonyl-[protein] + ADP + H(+). Its function is as follows. Putative serine/threonine-protein kinase that may function as a signaling receptor of extracellular matrix component. The polypeptide is Putative wall-associated receptor kinase-like 16 (WAKL16) (Arabidopsis thaliana (Mouse-ear cress)).